We begin with the raw amino-acid sequence, 771 residues long: Caldesmon (771 aa).

Disordered stretches follow at residues 23–91 (ERLS…ALLE) and 104–599 (LQEA…FSPK). Residues 26–199 (SYQRNDDDEE…PKEVPTEENQ (174 aa)) form a myosin and calmodulin-binding region. Tyr27 carries the post-translational modification Phosphotyrosine. Basic and acidic residues-rich tracts occupy residues 47 to 67 (QERLRQKEEGDVSGEVTEKSE), 104 to 115 (LQEALERQKEFD), 139 to 155 (ITGKEEKVETRQGRCEI), 170 to 194 (WRQDGEEEGKKEEKDSEEEKPKEVP), 203 to 215 (AVEKSTDKEEVVE), 240 to 435 (AADK…ESLP), 442 to 484 (SKKD…RELT), 509 to 518 (GSEKLKEKQQ), and 525 to 592 (DELK…EKKP). A run of 10 repeats spans residues 251–265 (EREKLEAEEKERLKA), 266–278 (EEEKKAAEEKQKA), 279–291 (EEEKKAAEERERA), 294–306 (EEEKRAAEERERA), 309–321 (EEERKAAEERERA), 324–336 (EEERKAAEERAKA), 337–349 (EEERKAAEERAKA), 350–362 (EEERKAAEERAKA), 363–375 (EKERKAAEERERA), and 378–390 (EEEKRAAEEKARL). The tract at residues 251–390 (EREKLEAEEK…KRAAEEKARL (140 aa)) is 10 X 13 AA approximate tandem repeats. The interval 523 to 580 (ELDELKKRREERRKILEEEEQKKKQEEAERKIREEEEKKRMKEEIERRRAEAAEKRQK) is tropomyosin-binding. Ser597 is subject to Phosphoserine; by CDK1. The strong actin-binding stretch occupies residues 612-644 (LNKSAQKSGMKPAHTTAVVSKIDSRLEQYTSAV). The tropomyosin-binding stretch occupies residues 622-632 (KPAHTTAVVSK). At Tyr640 the chain carries Phosphotyrosine. Residues 674 to 680 (WEKGNVF) form a calmodulin-binding region. The interval 676-771 (KGNVFSSPGG…NGLRQFEKEP (96 aa)) is disordered. The span at 679-691 (VFSSPGGTGTPNK) shows a compositional bias: polar residues. Ser682 is modified (phosphoserine; by CDK1). 2 positions are modified to phosphothreonine; by CDK1: Thr688 and Thr711. At Ser717 the chain carries Phosphoserine; by CDK1. Residues 723 to 742 (SDLRPGDVSGKRNLWEKQSV) show a composition bias toward basic and acidic residues. The tract at residues 726-752 (RPGDVSGKRNLWEKQSVEKPAASSSKV) is weak actin-binding.

Belongs to the caldesmon family. Phosphorylated in non-muscle cells. Phosphorylation by CDK1 during mitosis causes caldesmon to dissociate from microfilaments. Phosphorylation reduces caldesmon binding to actin, myosin, and calmodulin as well as its inhibition of actomyosin ATPase activity. Phosphorylation also occurs in both quiescent and dividing smooth muscle cells with similar effects on the interaction with actin and calmodulin and on microfilaments reorganization. In terms of tissue distribution, high-molecular-weight caldesmon (h-caldesmon) is predominantly expressed in smooth muscles, whereas low-molecular-weight caldesmon (l-caldesmon) is widely distributed in non-muscle tissues and cells. Not expressed in skeletal muscle or heart.

It localises to the cytoplasm. The protein localises to the cytoskeleton. Its subcellular location is the myofibril. The protein resides in the stress fiber. Functionally, actin- and myosin-binding protein implicated in the regulation of actomyosin interactions in smooth muscle and nonmuscle cells (could act as a bridge between myosin and actin filaments). Stimulates actin binding of tropomyosin which increases the stabilization of actin filament structure. In muscle tissues, inhibits the actomyosin ATPase by binding to F-actin. This inhibition is attenuated by calcium-calmodulin and is potentiated by tropomyosin. Interacts with actin, myosin, two molecules of tropomyosin and with calmodulin. Also plays an essential role during cellular mitosis and receptor capping. In Gallus gallus (Chicken), this protein is Caldesmon (CALD1).